A 419-amino-acid polypeptide reads, in one-letter code: UDP-N-acetylglucosamine 1-carboxyvinyltransferase (419 aa).

22-23 (KN) lines the phosphoenolpyruvate pocket. UDP-N-acetyl-alpha-D-glucosamine is bound at residue R95. The active-site Proton donor is the C119. At C119 the chain carries 2-(S-cysteinyl)pyruvic acid O-phosphothioketal. UDP-N-acetyl-alpha-D-glucosamine-binding positions include 164–167 (KVSV), D308, and I330.

It belongs to the EPSP synthase family. MurA subfamily.

The protein localises to the cytoplasm. It carries out the reaction phosphoenolpyruvate + UDP-N-acetyl-alpha-D-glucosamine = UDP-N-acetyl-3-O-(1-carboxyvinyl)-alpha-D-glucosamine + phosphate. The protein operates within cell wall biogenesis; peptidoglycan biosynthesis. In terms of biological role, cell wall formation. Adds enolpyruvyl to UDP-N-acetylglucosamine. This is UDP-N-acetylglucosamine 1-carboxyvinyltransferase from Rickettsia massiliae (strain Mtu5).